A 42-amino-acid polypeptide reads, in one-letter code: Tachystatin-B1 (42 aa).

Intrachain disulfides connect C4–C20, C11–C25, and C19–C37.

In terms of tissue distribution, granular hemocytes, small secretory granules.

It localises to the secreted. Exhibits stronger antimicrobial activity against the Gram-positive bacteria (S.aureus (IC(50) is 7.4 ug/ml)) and fungi (C.albicans (IC(50) is 3.0 ug/ml) and P.pastoris (IC(50) is 0.1 ug/ml)) than Gram-negative bacteria (E.coli no inhibition at 100 ug/ml). Binds to chitin (4.3 uM are required to obtain 50% of binding). Does not cause hemolysis on sheep erythrocytes. Has no blocking activity on the P-type calcium channel. In Tachypleus tridentatus (Japanese horseshoe crab), this protein is Tachystatin-B1.